The primary structure comprises 885 residues: Chromatin assembly factor 1 subunit A-B (885 aa).

4 disordered regions span residues 1–24 (MPGK…KMVQ), 115–157 (EDSN…NEEC), 176–361 (LDKP…EEEK), and 536–605 (VDSD…QKLK). A compositionally biased stretch (low complexity) spans 12-21 (KSSTKSNTKK). 3 stretches are compositionally biased toward polar residues: residues 116–128 (DSNI…SPLN), 134–157 (QLAN…NEEC), and 182–193 (SAASCTSVSNFS). Composition is skewed to low complexity over residues 211 to 227 (VSVS…SPDV) and 237 to 254 (SSPS…SNKT). Residues 251 to 376 (SNKTSAEKKK…KAEITRFLQK (126 aa)) are a coiled coil. A compositionally biased stretch (basic and acidic residues) spans 255–361 (SAEKKKTKDK…EEKRLKEEEK (107 aa)). 2 stretches are compositionally biased toward acidic residues: residues 536–548 (VDSD…EEPG) and 557–573 (ENED…DDDG). Positions 629–665 (CVWCDSKASEIRLLQKFSACILESPAVEEELTQDISS) are necessary for homodimerization, competence for chromatin assembly.

It belongs to the CHAF1A family. Homodimer.

The protein resides in the nucleus. Involved in chromatin assembly in DNA replication and DNA repair. The protein is Chromatin assembly factor 1 subunit A-B (chaf1a-b) of Xenopus laevis (African clawed frog).